Reading from the N-terminus, the 195-residue chain is MKIWTSEHVFDHPWETVTTAAMQKYPNPMNPSVVGVDVLDRHVDPSGKLHSHRLLSTEWGLPSIVKSLIGAARTKTYVQEHSVVDPIRRTMELKSTNISFTNMVSVDERLTYKPHPQDPEKTVLTQEALITVKGVSLSSYLEGLMASTISSNANKGREAMEWVIHKLNAEIEELAASARGSIRTPMAAAAALVDK.

The region spanning 1 to 172 (MKIWTSEHVF…VIHKLNAEIE (172 aa)) is the PRELI/MSF1 domain. Ser-46 and Ser-51 each carry phosphoserine.

This sequence belongs to the slowmo family.

The sequence is that of PRELI domain containing protein 3B (Prelid3b) from Rattus norvegicus (Rat).